The sequence spans 802 residues: Mitochondrial inner membrane m-AAA protease component AFG3L2 (802 aa).

The N-terminal 38 residues, 1 to 38 (MAHRCLLLWSRGGCRRGLPPLLVPRGCLGPDRRPCLRT), are a transit peptide targeting the mitochondrion. Residues 39-66 (LYQYATVQTASSRRSLLRDVIAAYQRFC) constitute a propeptide, removed in mature form. Positions 76-124 (YFPNGKNGKKASEPKEAVGEKKEPQPSGPQPSGGAGGGGGKRRGKKEDS) are disordered. The segment covering 85 to 99 (KASEPKEAVGEKKEP) has biased composition (basic and acidic residues). At Lys-116 the chain carries N6-succinyllysine. A run of 2 helical transmembrane segments spans residues 142–162 (FRMYFLWTALFWGGVMIYFVF) and 250–270 (GSFLLSMLPTVLIIAFLLYTI). Positions 309, 310, 351, 352, 353, 354, 355, and 489 each coordinate ATP. His-573 is a binding site for Zn(2+). The active site involves Glu-574. Residues His-577 and Asp-648 each coordinate Zn(2+). The disordered stretch occupies residues 759–802 (VEGTGSLDEDTSLPEGLQDWNKEREKEEKKEKEKEEPLNEKVVS). Basic and acidic residues predominate over residues 778–802 (WNKEREKEEKKEKEKEEPLNEKVVS).

In the N-terminal section; belongs to the AAA ATPase family. The protein in the C-terminal section; belongs to the peptidase M41 family. As to quaternary structure, homohexamer. Forms heterohexamers with SPG7 and AFG3L1. The m-AAA protease is either composed of homohexamers of AFG3L2 or heterohexamers of AFG3L1, AFG3L2 and/or SPG7. Interacts with MAIP1. Interacts with DNAJC19. Interacts with PHB2. Zn(2+) serves as cofactor. Post-translationally, upon import into the mitochondrion, the N-terminal transit peptide is cleaved to generate an intermediate form which undergoes autocatalytic proteolytic processing to generate the proteolytically active mature form. As to expression, highly expressed in the cerebellar Purkinje cells.

The protein localises to the mitochondrion inner membrane. It catalyses the reaction ATP + H2O = ADP + phosphate + H(+). Catalytic component of the m-AAA protease, a protease that plays a key role in proteostasis of inner mitochondrial membrane proteins, and which is essential for axonal and neuron development. AFG3L2 possesses both ATPase and protease activities: the ATPase activity is required to unfold substrates, threading them into the internal proteolytic cavity for hydrolysis into small peptide fragments. The m-AAA protease carries out protein quality control in the inner membrane of the mitochondria by mediating degradation of mistranslated or misfolded polypeptides. The m-AAA protease complex also promotes the processing and maturation of mitochondrial proteins, such as MRPL32/bL32m, PINK1 and SP7. Mediates protein maturation of the mitochondrial ribosomal subunit MRPL32/bL32m by catalyzing the cleavage of the presequence of MRPL32/bL32m prior to assembly into the mitochondrial ribosome. Required for SPG7 maturation into its active mature form after SPG7 cleavage by mitochondrial-processing peptidase (MPP). Required for the maturation of PINK1 into its 52kDa mature form after its cleavage by mitochondrial-processing peptidase (MPP). Acts as a regulator of calcium in neurons by mediating degradation of SMDT1/EMRE before its assembly with the uniporter complex, limiting the availability of SMDT1/EMRE for MCU assembly and promoting efficient assembly of gatekeeper subunits with MCU. Promotes the proteolytic degradation of GHITM upon hyperpolarization of mitochondria: progressive GHITM degradation leads to respiratory complex I degradation and broad reshaping of the mitochondrial proteome by AFG3L2. Also acts as a regulator of mitochondrial glutathione homeostasis by mediating cleavage and degradation of SLC25A39. SLC25A39 cleavage is prevented when SLC25A39 binds iron-sulfur. Involved in the regulation of OMA1-dependent processing of OPA1. May act by mediating processing of OMA1 precursor, participating in OMA1 maturation. This chain is Mitochondrial inner membrane m-AAA protease component AFG3L2, found in Mus musculus (Mouse).